Here is a 335-residue protein sequence, read N- to C-terminus: Leukocyte immunoglobulin-like receptor subfamily B member 4A (335 aa).

Positions 1–23 (MIAMLTVLLYLGLILEPRTAVQA) are cleaved as a signal peptide. Residues 24-238 (GHLPKPIIWA…TEDGLETYQK (215 aa)) are Extracellular-facing. 2 consecutive Ig-like C2-type domains span residues 42-125 (YTSV…ENPS) and 124-212 (PSLS…KPSN). A disulfide bridge connects residues cysteine 49 and cysteine 98. 2 N-linked (GlcNAc...) asparagine glycosylation sites follow: asparagine 133 and asparagine 191. Residues cysteine 144 and cysteine 196 are joined by a disulfide bond. A helical transmembrane segment spans residues 239–260 (ILIGVLVSFLLLFFLLLFLILI). The Cytoplasmic portion of the chain corresponds to 261–335 (GYQYGHKKKA…CIRTQEQNNS (75 aa)). Short sequence motifs (ITIM motif) lie at residues 298 to 303 (IVYAQV) and 320 to 325 (VTYAQL).

Interacts (when tyrosine phosphorylated) with SH2 domain-containing phosphatases PTPN6/SHP-1 and PTPN11/SHP-2; interaction with PTPN6 enhances inhibition of mast cell activation. Tyrosine phosphorylated. As to expression, expressed on mast cells and natural killer cells (at protein level). Expressed on neutrophils (at protein level). Expressed on eosinophils (at protein level). Expressed on dendritic cells (at protein level). Expressed on memory and marginal zone B cells (at protein level). Expressed on CD8 T cells (at protein level). Expressed in the uterus of pregnant mice where it is detected at day 4.0 of pregnancy with levels dropping at day 4.5. Highly expressed in the luminal epithelium of uterine endometrium with lower levels in the glandular epithelium.

The protein localises to the cell membrane. In terms of biological role, inhibitory receptor involved in the down-regulation of the immune response. Receptor for FN1. Receptor for integrin ITGAV/ITGB3. Inhibits IgE-mediated mast cell activation, at least in part through interaction with ITGAV/ITGB3. Also inhibits KITLG/SCF-mediated mast cell activation. Through interaction with ITGAV/ITGB3, inhibits antibody production by memory and marginal zone B cells, probably by suppressing their differentiation into plasma cells. Inhibits IFNG production by CD8 T cells, CD4 T cells and natural killer cells. Inhibits antigen presentation by dendritic cells to T cells, preventing T cell activation. Inhibits lipopolysaccharide-mediated neutrophil-dependent vascular injury. Suppresses the allergic inflammatory response by inhibiting infiltration of neutrophils and eosinophils and preventing mast cell degranulation. Inhibits lysis by natural killer cells. The protein is Leukocyte immunoglobulin-like receptor subfamily B member 4A of Mus musculus (Mouse).